Consider the following 440-residue polypeptide: Transposon Ty1-NL1 Gag polyprotein (440 aa).

Composition is skewed to polar residues over residues Met1 to Ser23, Thr48 to Ser60, Ser71 to Gln86, and Pro131 to Phe152. 3 disordered regions span residues Met1–Gln86, Pro131–Pro171, and Gln350–Ile425. Residues Thr153–Thr165 show a composition bias toward low complexity. Positions Asn299–His401 are RNA-binding. The span at Asn363–Arg372 shows a compositional bias: basic and acidic residues. Polar residues predominate over residues Thr373–Pro412.

In terms of assembly, homotrimer.

It is found in the cytoplasm. Its function is as follows. Capsid protein (CA) is the structural component of the virus-like particle (VLP), forming the shell that encapsulates the retrotransposons dimeric RNA genome. The particles are assembled from trimer-clustered units and there are holes in the capsid shells that allow for the diffusion of macromolecules. CA also has nucleocapsid-like chaperone activity, promoting primer tRNA(i)-Met annealing to the multipartite primer-binding site (PBS), dimerization of Ty1 RNA and initiation of reverse transcription. The protein is Transposon Ty1-NL1 Gag polyprotein (TY1A-NL1) of Saccharomyces cerevisiae (strain ATCC 204508 / S288c) (Baker's yeast).